A 703-amino-acid polypeptide reads, in one-letter code: Harmonin-binding protein USHBP1 (703 aa).

The segment covering 1 to 15 (MSARATRPRSRRGRH) has biased composition (basic residues). Disordered regions lie at residues 1–113 (MSAR…PPGN) and 138–172 (HQPPSHSGPMEFEGTSEGGAGSLGKQEGAGSCQRE). The stretch at 189-227 (SREDELVRTQASLEAIRAEKETLQKEVQELQDSLLRLEP) forms a coiled coil. Residues 228-256 (CPHLSHNQAGGSGSGSSSSEADREPWETQ) are disordered. A coiled-coil region spans residues 289-309 (EMHIMEAQMEQLRGSIEKLKC). Residues 396–416 (MDAGAQQNPQPSPEGSSVDKP) are disordered. The segment covering 400 to 410 (AQQNPQPSPEG) has biased composition (polar residues). Positions 476 to 513 (RLEKTQIQQDLVAAREALADLMLRLQLVRREKRGLELR) form a coiled coil. Positions 540–583 (AGGANSSGGHSSGGGSSGDEEEWYQGLPAVPGGTSGIDGGQVGR) are disordered. Residues 572-581 (GTSGIDGGQV) show a composition bias toward gly residues. A coiled-coil region spans residues 596-681 (ASLTRTLDLQ…QAEEVAVLEA (86 aa)).

Belongs to the MCC family. Interacts via its C-terminus with the first PDZ domain of USH1C. Highest level of expression in heart, and moderate to low expression in skeletal muscle, kidney, liver, small intestine, placenta and lung.

The chain is Harmonin-binding protein USHBP1 from Homo sapiens (Human).